The following is a 443-amino-acid chain: EGF-containing fibulin-like extracellular matrix protein 2 (443 aa).

Positions 1-27 (MLPFASCLPGSLLLWAFLLLLLGAASP) are cleaved as a signal peptide. Position 28 is a pyrrolidone carboxylic acid (Gln-28). The region spanning 36 to 81 (YTECTDGYEWDADSQHCRDVNECLTIPEACKGEMKCINHYGGYLCL) is the EGF-like 1; atypical domain. 18 disulfides stabilise this stretch: Cys-58/Cys-121, Cys-65/Cys-80, Cys-71/Cys-109, Cys-127/Cys-140, Cys-134/Cys-149, Cys-151/Cys-162, Cys-168/Cys-177, Cys-173/Cys-186, Cys-188/Cys-201, Cys-207/Cys-217, Cys-213/Cys-226, Cys-228/Cys-241, Cys-247/Cys-258, Cys-254/Cys-267, Cys-269/Cys-281, Cys-287/Cys-300, Cys-294/Cys-309, and Cys-315/Cys-327. The tract at residues 91 to 117 (LHGEGPPPPAAHAQQPNPCPQGYEPDE) is disordered. The 41-residue stretch at 123–163 (DVDECTQALHDCRPSQDCHNLPGSYQCTCPDGYRKIGPECV) folds into the EGF-like 2; calcium-binding domain. One can recognise an EGF-like 3; calcium-binding domain in the interval 164–202 (DIDECRYRYCQHRCVNLPGSFRCQCEPGFQLGPNNRSCV). Asn-198 carries an N-linked (GlcNAc...) asparagine glycan. The 40-residue stretch at 203–242 (DVNECDMGAPCEQRCFNSYGTFLCRCNQGYELHRDGFSCS) folds into the EGF-like 4; calcium-binding domain. The 40-residue stretch at 243–282 (DIDECGYSSYLCQYRCVNEPGRFSCHCPQGYQLLATRLCQ) folds into the EGF-like 5; calcium-binding domain. In terms of domain architecture, EGF-like 6; calcium-binding spans 283 to 328 (DIDECETGAHQCSEAQTCVNFHGGYRCVDTNRCVEPYVQVSDNRCL). A glycan (N-linked (GlcNAc...) asparagine) is linked at Asn-394.

Belongs to the fibulin family. Homodimer; disulfide-linked. Multimer; allows heparin binding. Monomer. Binds preferentially to p53 mutants. Interacts with FBN1 (via N-terminal domain); this interaction inhibits EFEMP2 binding to LOX and ELN. Interacts with ELN with moderate affinity; this interaction regulates ELN self-assembly maturation stage. Interacts with PCOLCE. Interacts with collagen type IV trimer (COL4A1-COL4A1-COL4A2), NID2 and moderately with COL15A1-derived endostatin. Interacts with EMILIN1; this interaction promotes the incorporation of EFEMP2 into the extracellular matrix. Interacts with LTBP4; the LTBP4 long form (LTBP4L) has a stronger binding affinity than the LTBP4 short form and the LTBP4 long form promotes fibrillar deposition of EFEMP2. Interacts with LOX (via propeptide); this interaction is strong and facilitates formation of ternary complexes with ELN during elastic fiber assembly; this interaction limits interaction of EFEMP2 with FBLN5. Interacts with PITX2. Interacts with FBLN5 with moderate affinity. Interacts with LOXL1 (via propeptide), LTBP1 and TGFB1 stronger than with LOXL2 and LTBP3. N-glycosylated; contains mostly complex-type glycans. Not O-glycosylated. In terms of processing, cleaved by ELANE; produces a 50-55 kDa fragment. Cleaved by MMP2 and MMP9; produces several fragments. Expressed in elastic fibers of the skin, near the dermal-epidermal junction, surrounding the hair follicles and throughout the dermis. Expressed in tendon around tenocytes. Prominently expressed in cartilage, bone, perichondrium and ligaments. Also detected in bone marrow stroma. Expressed in aorta, lung, and esophagus.

The protein localises to the secreted. It is found in the extracellular space. The protein resides in the extracellular matrix. It localises to the basement membrane. In terms of biological role, plays a crucial role in elastic fiber formation in tissue, and in the formation of ultrastructural connections between elastic laminae and smooth muscle cells in the aorta, therefore participates in terminal differentiation and maturation of smooth muscle cell (SMC) and in the mechanical properties and wall integrity maintenance of the aorta. In addition, is involved in the control of collagen fibril assembly in tissue throught proteolytic activation of LOX leading to cross- linking of collagen and elastin. Also promotes ELN coacervation and participates in the deposition of ELN coacervates on to microfibrils but also regulates ELN cross- linking through LOX interaction. Moreover adheres to the cells through heparin binding in a calcium-dependent manner and regulates vascularlar smooth muscle cells proliferation through angiotensin signaling. The sequence is that of EGF-containing fibulin-like extracellular matrix protein 2 from Mus musculus (Mouse).